Reading from the N-terminus, the 719-residue chain is DNA replication licensing factor MCM7 (719 aa).

Ala-2 carries the N-acetylalanine modification. Glycyl lysine isopeptide (Lys-Gly) (interchain with G-Cter in SUMO2) cross-links involve residues Lys-15 and Lys-28. Ser-314 bears the Phosphoserine mark. Residues 332 to 538 (FYEKLAASIA…NDLRLAQHIT (207 aa)) form the MCM domain. Tyr-345 serves as a coordination point for ATP. Ser-365 is subject to Phosphoserine. Gly-384, Ala-386, Lys-387, Ser-388, and Asn-489 together coordinate ATP. A Phosphoserine modification is found at Ser-500. Positions 513–516 (SRFD) match the Arginine finger motif. Residue Arg-514 participates in ATP binding. An interaction with RAD17 region spans residues 521-564 (IQDRPDRDNDLRLAQHITYVHQHSRQPPAQFEPLDMKLMRRYIA). The tract at residues 577–719 (LADYITAAYV…NTSRTRITFV (143 aa)) is interaction with ATRIP. An ATP-binding site is contributed by Arg-604. Ser-678 carries the phosphoserine modification.

This sequence belongs to the MCM family. As to quaternary structure, component of the MCM2-7 complex. The complex forms a toroidal hexameric ring with the proposed subunit order MCM2-MCM6-MCM4-MCM7-MCM3-MCM5. Component of the CMG helicase complex, a hexameric ring of related MCM2-7 subunits stabilized by CDC45 and the tetrameric GINS complex. Interacts with the ATR-ATRIP complex and with RAD17. Interacts with TIPIN. Interacts with MCMBP. Interacts with ANKRD17. Component of the replisome complex composed of at least DONSON, MCM2, MCM7, PCNA and TICRR. Post-translationally, O-glycosylated (O-GlcNAcylated), in a cell cycle-dependent manner. In terms of processing, ubiquitinated by ECS(LRR1) E3 ubiquitin-protein ligase complex when forks converge following formation of DNA interstrand cross-links. During mitosis, ubiquitinated by TRAIP when forks converge following formation of DNA interstrand cross-links. Short ubiquitin chains on MCM7 promote recruitment of DNA glycosylase NEIL3. If the interstrand cross-link cannot be cleaved by NEIL3, the ubiquitin chains continue to grow on MCM7, promoting the unloading of the CMG helicase complex by the VCP/p97 ATPase.

The protein resides in the nucleus. It localises to the chromosome. It carries out the reaction ATP + H2O = ADP + phosphate + H(+). Its function is as follows. Acts as a component of the MCM2-7 complex (MCM complex) which is the replicative helicase essential for 'once per cell cycle' DNA replication initiation and elongation in eukaryotic cells. Core component of CDC45-MCM-GINS (CMG) helicase, the molecular machine that unwinds template DNA during replication, and around which the replisome is built. The active ATPase sites in the MCM2-7 ring are formed through the interaction surfaces of two neighboring subunits such that a critical structure of a conserved arginine finger motif is provided in trans relative to the ATP-binding site of the Walker A box of the adjacent subunit. The six ATPase active sites, however, are likely to contribute differentially to the complex helicase activity. Uncomplexed form does not show ATPase or DNA helicase. Required for S-phase checkpoint activation upon UV-induced damage. The chain is DNA replication licensing factor MCM7 (Mcm7) from Mus musculus (Mouse).